A 245-amino-acid polypeptide reads, in one-letter code: Terpene cyclase esdpB (245 aa).

Transmembrane regions (helical) follow at residues 19–39 (MVASIFLISGTGWIVNYVTTI), 48–68 (SGVTLLSLCNNLAWETVFAVI), 75–95 (IAALVITVWLLVNIYVIYVSV), 112–132 (LPVVTLLGFVGFLTGHIALSM), 140–160 (LYWGGMICQVTLSASALGLLI), 177–197 (FIASSFGVPGLFVRAVYWPSA), and 208–228 (WLSGVFFLLDLSYGAIYYHIS).

The protein belongs to the paxB family.

Its subcellular location is the membrane. It functions in the pathway secondary metabolite biosynthesis; terpenoid biosynthesis. Functionally, terpene cyclase; part of the cluster that mediates the biosynthesis of shearones, diterpenoid pyrones (DPs) which are structurally diverse meroterpenoids consisting of a diterpene linked by a pyrone, and which may exhibit a range of bioactivities. Within the pathway, esdpB takes part to the biosynthesis of the molecular scaffold by catalyzing the cyclization of the prenyl group initiated by protonation and ring-opening of the epoxide to produce the diterpenoid pyrone scaffold. The molecular scaffold is commonly biosynthesized by a series of enzymes including the non-reducing polyketide synthase (NR-PKS) esdpA that generates an alpha-pyrone; the prenyltransferase esdpC that attaches a geranylgeranyl pyrophosphate (GGPP) produced by the GGPP synthase (GGPPS) esdpD onto the pyrone unit; the FAD-dependent monooxygenase esdpE that converts an olefin on the diterpene unit into an epoxide; and the terpene cyclase esdpB that catalyzes the cyclization reactions to give the molecular backbone shearone A. In the modification steps, esdpF oxidizes the hydroxy group to a ketone at C-3 and esdpG then attaches hydroxy groups at both C-11 and C-12. After that, esdpI hydroxylates at C-20 and esdpH hydroxylates at C-6'. The ether bridge is generated by nucleophilic attack of the hydroxy group at C-20 to the carbonyl carbon at C-3. EsdpH can also functions prior to esdpI. The different combinations of these modification enzymes lead to the production of diverse shearone derivatives, shearone I being the end product of the pathway. The alpha-ketoglutarate-dependent dioxygenase esdpJ seems not to be involved in this pathway. This Penicillium shearii (Eupenicillium shearii) protein is Terpene cyclase esdpB.